We begin with the raw amino-acid sequence, 296 residues long: Polyamine aminopropyltransferase (296 aa).

Residues 16–251 (HLWYFEYYTG…GMWSYTFASK (236 aa)) form the PABS domain. Gln-46 serves as a coordination point for S-methyl-5'-thioadenosine. Spermidine-binding residues include His-77 and Asp-101. S-methyl-5'-thioadenosine-binding positions include Glu-121 and 152–153 (NG). Catalysis depends on Asp-170, which acts as the Proton acceptor. Residue 170–173 (DSTD) participates in spermidine binding.

Belongs to the spermidine/spermine synthase family. Homodimer or homotetramer.

The protein localises to the cytoplasm. The catalysed reaction is S-adenosyl 3-(methylsulfanyl)propylamine + putrescine = S-methyl-5'-thioadenosine + spermidine + H(+). The protein operates within amine and polyamine biosynthesis; spermidine biosynthesis; spermidine from putrescine: step 1/1. Its function is as follows. Catalyzes the irreversible transfer of a propylamine group from the amino donor S-adenosylmethioninamine (decarboxy-AdoMet) to putrescine (1,4-diaminobutane) to yield spermidine. This Thermotoga petrophila (strain ATCC BAA-488 / DSM 13995 / JCM 10881 / RKU-1) protein is Polyamine aminopropyltransferase.